The primary structure comprises 106 residues: MRGNIAQLMQQAQKMQENLQRAQEELAKLEVTGSAGGGMVSVTLTGAKECRKVRIDPSILSDQEMAEDLIAAAFNDASNKIDAESKDRMGSATAGMQLPPGMKLPF.

Residues Ile-81–Phe-106 are disordered.

Belongs to the YbaB/EbfC family. As to quaternary structure, homodimer.

The protein resides in the cytoplasm. Its subcellular location is the nucleoid. Its function is as follows. Binds to DNA and alters its conformation. May be involved in regulation of gene expression, nucleoid organization and DNA protection. The chain is Nucleoid-associated protein XCV1128 from Xanthomonas euvesicatoria pv. vesicatoria (strain 85-10) (Xanthomonas campestris pv. vesicatoria).